The chain runs to 152 residues: MSTFFLKQAQIEKQWIVVDATDAVVGRLAAFVSTILRGKTKPTYTPHMDCGDNVIVVNASKVKFSGSKMSDKVYYRHTGYPGGIKSTTPAKILRGKKPCEVVKLAVKRMLDDGPMARRRLKNLYVYAGPEHRHEAQKPSIVEFASLNRKNRR.

It belongs to the universal ribosomal protein uL13 family. Part of the 50S ribosomal subunit.

Its function is as follows. This protein is one of the early assembly proteins of the 50S ribosomal subunit, although it is not seen to bind rRNA by itself. It is important during the early stages of 50S assembly. The polypeptide is Large ribosomal subunit protein uL13 (Neorickettsia sennetsu (strain ATCC VR-367 / Miyayama) (Ehrlichia sennetsu)).